Reading from the N-terminus, the 100-residue chain is Aspartyl/glutamyl-tRNA(Asn/Gln) amidotransferase subunit C (100 aa).

It belongs to the GatC family. Heterotrimer of A, B and C subunits.

It carries out the reaction L-glutamyl-tRNA(Gln) + L-glutamine + ATP + H2O = L-glutaminyl-tRNA(Gln) + L-glutamate + ADP + phosphate + H(+). The enzyme catalyses L-aspartyl-tRNA(Asn) + L-glutamine + ATP + H2O = L-asparaginyl-tRNA(Asn) + L-glutamate + ADP + phosphate + 2 H(+). In terms of biological role, allows the formation of correctly charged Asn-tRNA(Asn) or Gln-tRNA(Gln) through the transamidation of misacylated Asp-tRNA(Asn) or Glu-tRNA(Gln) in organisms which lack either or both of asparaginyl-tRNA or glutaminyl-tRNA synthetases. The reaction takes place in the presence of glutamine and ATP through an activated phospho-Asp-tRNA(Asn) or phospho-Glu-tRNA(Gln). This chain is Aspartyl/glutamyl-tRNA(Asn/Gln) amidotransferase subunit C, found in Streptococcus agalactiae serotype III (strain NEM316).